A 209-amino-acid polypeptide reads, in one-letter code: Small ribosomal subunit protein uS4 (209 aa).

Residues alanine 99–alanine 160 enclose the S4 RNA-binding domain.

It belongs to the universal ribosomal protein uS4 family. In terms of assembly, part of the 30S ribosomal subunit. Contacts protein S5. The interaction surface between S4 and S5 is involved in control of translational fidelity.

Its function is as follows. One of the primary rRNA binding proteins, it binds directly to 16S rRNA where it nucleates assembly of the body of the 30S subunit. With S5 and S12 plays an important role in translational accuracy. This is Small ribosomal subunit protein uS4 from Dechloromonas aromatica (strain RCB).